Reading from the N-terminus, the 258-residue chain is Thrombin-like enzyme CPI-enzyme 2 (258 aa).

The N-terminal stretch at 1–18 is a signal peptide; sequence MVLIRVLANLLILQLSYA. A propeptide spanning residues 19–24 is cleaved from the precursor; it reads QKSSEL. A Peptidase S1 domain is found at 25–249; it reads VIGGDECNIN…YTDWIENIIA (225 aa). 6 disulfide bridges follow: cysteine 31/cysteine 163, cysteine 50/cysteine 66, cysteine 98/cysteine 256, cysteine 142/cysteine 210, cysteine 174/cysteine 189, and cysteine 200/cysteine 225. N-linked (GlcNAc...) asparagine glycosylation occurs at asparagine 44. Histidine 65 functions as the Charge relay system in the catalytic mechanism. Asparagine 79 and asparagine 103 each carry an N-linked (GlcNAc...) asparagine glycan. The active-site Charge relay system is aspartate 110. Asparagine 121 carries an N-linked (GlcNAc...) asparagine glycan. Serine 204 acts as the Charge relay system in catalysis.

It belongs to the peptidase S1 family. Snake venom subfamily. As to quaternary structure, monomer. In terms of processing, N-glycosylated. Expressed by the venom gland.

It localises to the secreted. Its function is as follows. Thrombin-like snake venom serine protease that cleaves fibrinogen beta (FGB) releasing fibrinopeptide B. Promotes capillary permeability-increasing activity through the release of peptides from the beta-chain of fibrinogen. In Gloydius ussuriensis (Ussuri mamushi), this protein is Thrombin-like enzyme CPI-enzyme 2.